The chain runs to 156 residues: Small ribosomal subunit protein uS7 (156 aa).

Belongs to the universal ribosomal protein uS7 family. In terms of assembly, part of the 30S ribosomal subunit. Contacts proteins S9 and S11.

Functionally, one of the primary rRNA binding proteins, it binds directly to 16S rRNA where it nucleates assembly of the head domain of the 30S subunit. Is located at the subunit interface close to the decoding center, probably blocks exit of the E-site tRNA. The polypeptide is Small ribosomal subunit protein uS7 (Shewanella woodyi (strain ATCC 51908 / MS32)).